Consider the following 218-residue polypeptide: Cytochrome c biogenesis ATP-binding export protein CcmA (218 aa).

The ABC transporter domain occupies 12–217 (LHAEQLSSIR…KLSLEYRGEV (206 aa)). 44–51 (GPNGAGKS) is a binding site for ATP.

This sequence belongs to the ABC transporter superfamily. CcmA exporter (TC 3.A.1.107) family. As to quaternary structure, the complex is composed of two ATP-binding proteins (CcmA) and two transmembrane proteins (CcmB).

The protein resides in the cell inner membrane. It carries out the reaction heme b(in) + ATP + H2O = heme b(out) + ADP + phosphate + H(+). In terms of biological role, part of the ABC transporter complex CcmAB involved in the biogenesis of c-type cytochromes; once thought to export heme, this seems not to be the case, but its exact role is uncertain. Responsible for energy coupling to the transport system. The sequence is that of Cytochrome c biogenesis ATP-binding export protein CcmA from Idiomarina loihiensis (strain ATCC BAA-735 / DSM 15497 / L2-TR).